Here is a 224-residue protein sequence, read N- to C-terminus: Metalloproteinase inhibitor 4 (224 aa).

Residues 1-29 (MPWSPLAALSWALVLRLLALLWPPGRGEA) form the signal peptide. Cysteine 30 contributes to the Zn(2+) binding site. Involved in metalloproteinase-binding stretches follow at residues 30 to 33 (CSCA) and 99 to 100 (SS). Intrachain disulfides connect cysteine 30/cysteine 102, cysteine 32/cysteine 131, cysteine 42/cysteine 156, cysteine 158/cysteine 205, cysteine 163/cysteine 168, and cysteine 176/cysteine 197. The region spanning 30–156 (CSCAPAHPQQ…SLNHHYHQNC (127 aa)) is the NTR domain.

It belongs to the protease inhibitor I35 (TIMP) family. As to expression, expressed in brain, heart, ovary and skeletal muscle.

It is found in the secreted. Functionally, complexes with metalloproteinases (such as collagenases) and irreversibly inactivates them by binding to their catalytic zinc cofactor. This chain is Metalloproteinase inhibitor 4 (Timp4), found in Mus musculus (Mouse).